A 239-amino-acid polypeptide reads, in one-letter code: Ribonuclease 3 (239 aa).

One can recognise an RNase III domain in the interval 12–137 (RARLETAIGY…LIAAIYLDGG (126 aa)). Residue Glu50 coordinates Mg(2+). Asp54 is a catalytic residue. Asp123 and Glu126 together coordinate Mg(2+). Glu126 is an active-site residue. Residues 162–231 (DAKTELQEWA…AMRLLEREGV (70 aa)) enclose the DRBM domain.

Belongs to the ribonuclease III family. As to quaternary structure, homodimer. The cofactor is Mg(2+).

Its subcellular location is the cytoplasm. It catalyses the reaction Endonucleolytic cleavage to 5'-phosphomonoester.. Its function is as follows. Digests double-stranded RNA. Involved in the processing of primary rRNA transcript to yield the immediate precursors to the large and small rRNAs (23S and 16S). Processes some mRNAs, and tRNAs when they are encoded in the rRNA operon. Processes pre-crRNA and tracrRNA of type II CRISPR loci if present in the organism. The chain is Ribonuclease 3 from Sinorhizobium fredii (strain NBRC 101917 / NGR234).